The primary structure comprises 257 residues: tRNA dimethylallyltransferase (257 aa).

15 to 22 (GPTASGKS) lines the ATP pocket. Residue 17–22 (TASGKS) participates in substrate binding.

It belongs to the IPP transferase family. Monomer. The cofactor is Mg(2+).

It carries out the reaction adenosine(37) in tRNA + dimethylallyl diphosphate = N(6)-dimethylallyladenosine(37) in tRNA + diphosphate. Catalyzes the transfer of a dimethylallyl group onto the adenine at position 37 in tRNAs that read codons beginning with uridine, leading to the formation of N6-(dimethylallyl)adenosine (i(6)A). This is tRNA dimethylallyltransferase from Oenococcus oeni (strain ATCC BAA-331 / PSU-1).